A 195-amino-acid chain; its full sequence is Glycerol-3-phosphate acyltransferase (195 aa).

Helical transmembrane passes span phenylalanine 3 to leucine 23, leucine 52 to glutamine 72, isoleucine 80 to phenylalanine 100, leucine 113 to leucine 133, and leucine 147 to isoleucine 167.

This sequence belongs to the PlsY family. Probably interacts with PlsX.

It localises to the cell inner membrane. The enzyme catalyses an acyl phosphate + sn-glycerol 3-phosphate = a 1-acyl-sn-glycero-3-phosphate + phosphate. The protein operates within lipid metabolism; phospholipid metabolism. Its function is as follows. Catalyzes the transfer of an acyl group from acyl-phosphate (acyl-PO(4)) to glycerol-3-phosphate (G3P) to form lysophosphatidic acid (LPA). This enzyme utilizes acyl-phosphate as fatty acyl donor, but not acyl-CoA or acyl-ACP. The sequence is that of Glycerol-3-phosphate acyltransferase from Ehrlichia ruminantium (strain Gardel).